A 356-amino-acid chain; its full sequence is UDP-N-acetylglucosamine--N-acetylmuramyl-(pentapeptide) pyrophosphoryl-undecaprenol N-acetylglucosamine transferase (356 aa).

UDP-N-acetyl-alpha-D-glucosamine contacts are provided by residues 12 to 14 (TGG), Asn124, Arg163, Ser188, Ile242, 261 to 266 (ALTVSE), and Gln287.

It belongs to the glycosyltransferase 28 family. MurG subfamily.

It localises to the cell inner membrane. It carries out the reaction di-trans,octa-cis-undecaprenyl diphospho-N-acetyl-alpha-D-muramoyl-L-alanyl-D-glutamyl-meso-2,6-diaminopimeloyl-D-alanyl-D-alanine + UDP-N-acetyl-alpha-D-glucosamine = di-trans,octa-cis-undecaprenyl diphospho-[N-acetyl-alpha-D-glucosaminyl-(1-&gt;4)]-N-acetyl-alpha-D-muramoyl-L-alanyl-D-glutamyl-meso-2,6-diaminopimeloyl-D-alanyl-D-alanine + UDP + H(+). It functions in the pathway cell wall biogenesis; peptidoglycan biosynthesis. Functionally, cell wall formation. Catalyzes the transfer of a GlcNAc subunit on undecaprenyl-pyrophosphoryl-MurNAc-pentapeptide (lipid intermediate I) to form undecaprenyl-pyrophosphoryl-MurNAc-(pentapeptide)GlcNAc (lipid intermediate II). The polypeptide is UDP-N-acetylglucosamine--N-acetylmuramyl-(pentapeptide) pyrophosphoryl-undecaprenol N-acetylglucosamine transferase (Ectopseudomonas mendocina (strain ymp) (Pseudomonas mendocina)).